Consider the following 271-residue polypeptide: Oligodendrocyte transcription factor 1 (271 aa).

A disordered region spans residues 38–117; that stretch reads YRQPPSSSSS…RKINSRERKR (80 aa). Positions 43-61 are enriched in low complexity; the sequence is SSSSSSTSSTSSTSSSSTT. Positions 105–164 constitute a bHLH domain; it reads QLRRKINSRERKRMQDLNLAMDALREVILPYSAAHCQGAPGRKLSKIATLLLARNYILLL.

As to expression, expressed in the brain, in oligodendrocytes. Strongly expressed in oligodendrogliomas, while expression is weak to moderate in astrocytomas. Expression in glioblastomas is highly variable.

Its subcellular location is the nucleus. Functionally, promotes formation and maturation of oligodendrocytes, especially within the brain. Cooperates with OLIG2 to establish the pMN domain of the embryonic neural tube. In Homo sapiens (Human), this protein is Oligodendrocyte transcription factor 1 (OLIG1).